The primary structure comprises 570 residues: Proline--tRNA ligase (570 aa).

This sequence belongs to the class-II aminoacyl-tRNA synthetase family. ProS type 1 subfamily. As to quaternary structure, homodimer.

The protein resides in the cytoplasm. It catalyses the reaction tRNA(Pro) + L-proline + ATP = L-prolyl-tRNA(Pro) + AMP + diphosphate. Its function is as follows. Catalyzes the attachment of proline to tRNA(Pro) in a two-step reaction: proline is first activated by ATP to form Pro-AMP and then transferred to the acceptor end of tRNA(Pro). As ProRS can inadvertently accommodate and process non-cognate amino acids such as alanine and cysteine, to avoid such errors it has two additional distinct editing activities against alanine. One activity is designated as 'pretransfer' editing and involves the tRNA(Pro)-independent hydrolysis of activated Ala-AMP. The other activity is designated 'posttransfer' editing and involves deacylation of mischarged Ala-tRNA(Pro). The misacylated Cys-tRNA(Pro) is not edited by ProRS. In Clostridium perfringens (strain ATCC 13124 / DSM 756 / JCM 1290 / NCIMB 6125 / NCTC 8237 / Type A), this protein is Proline--tRNA ligase.